We begin with the raw amino-acid sequence, 363 residues long: Beta-1,3-N-acetylglucosaminyltransferase lunatic fringe (363 aa).

At 1 to 8 the chain is on the cytoplasmic side; sequence MLKSCGRK. Residues 9-29 form a helical; Signal-anchor for type II membrane protein membrane-spanning segment; that stretch reads LLLSLVGSMFTCLLVLMVEPP. Residues 30-363 lie on the Lumenal side of the membrane; that stretch reads GRPGLARGEA…TPWCPSNVVY (334 aa). A substrate-binding site is contributed by arginine 113. Asparagine 151 is a glycosylation site (N-linked (GlcNAc...) asparagine). Intrachain disulfides connect cysteine 152–cysteine 163 and cysteine 181–cysteine 244. Aspartate 185 lines the substrate pocket. Aspartate 186 serves as a coordination point for Mn(2+). Aspartate 274 is a catalytic residue. Histidine 298 provides a ligand contact to Mn(2+). Cysteine 348 and cysteine 357 are joined by a disulfide.

Belongs to the glycosyltransferase 31 family. The cofactor is Mn(2+). Co(2+) serves as cofactor. A soluble form may be derived from the membrane form by proteolytic processing.

It is found in the golgi apparatus membrane. It carries out the reaction 3-O-(alpha-L-fucosyl)-L-threonyl-[EGF-like domain protein] + UDP-N-acetyl-alpha-D-glucosamine = 3-O-(N-acetyl-beta-D-glucosaminyl-(1-&gt;3)-alpha-L-fucosyl)-L-threonyl-[EGF-like domain protein] + UDP + H(+). The enzyme catalyses 3-O-(alpha-L-fucosyl)-L-seryl-[EGF-like domain protein] + UDP-N-acetyl-alpha-D-glucosamine = 3-O-(N-acetyl-beta-D-glucosaminyl-(1-&gt;3)-alpha-L-fucosyl)-L-seryl-[EGF-like domain protein] + UDP + H(+). Glycosyltransferase that initiates the elongation of O-linked fucose residues attached to EGF-like repeats in the extracellular domain of Notch molecules. Essential mediator of somite segmentation and patterning. The sequence is that of Beta-1,3-N-acetylglucosaminyltransferase lunatic fringe (LFNG) from Gallus gallus (Chicken).